The chain runs to 255 residues: Menaquinol:cytochrome c reductase cytochrome c subunit (255 aa).

Helical transmembrane passes span 46 to 62 (WMVG…LTIV), 104 to 124 (VVGA…APFL), and 137 to 157 (VAVG…WQSV). The 76-residue stretch at 178–253 (DTNAEGYKVF…ELAKFISETT (76 aa)) folds into the Cytochrome c domain. Heme c contacts are provided by Cys-192, Cys-195, and His-196.

The protein belongs to the cytochrome b family. In terms of assembly, the main subunits of the menaquinol:cytochrome c complex are a Rieske-type iron-sulfur protein (QcrA), a cytochrome b (QcrB) and a cytochrome c (QcrC). Requires heme c as cofactor.

The protein resides in the cell membrane. Functionally, component of the menaquinol:cytochrome c reductase complex. This is Menaquinol:cytochrome c reductase cytochrome c subunit (qcrC) from Bacillus subtilis (strain 168).